We begin with the raw amino-acid sequence, 506 residues long: Maturase K (506 aa).

The protein belongs to the intron maturase 2 family. MatK subfamily.

It is found in the plastid. The protein resides in the chloroplast. Its function is as follows. Usually encoded in the trnK tRNA gene intron. Probably assists in splicing its own and other chloroplast group II introns. The protein is Maturase K of Cytisus scoparius (Scotch broom).